Here is a 176-residue protein sequence, read N- to C-terminus: Large ribosomal subunit protein uL6 (176 aa).

Belongs to the universal ribosomal protein uL6 family. As to quaternary structure, part of the 50S ribosomal subunit.

This protein binds to the 23S rRNA, and is important in its secondary structure. It is located near the subunit interface in the base of the L7/L12 stalk, and near the tRNA binding site of the peptidyltransferase center. This chain is Large ribosomal subunit protein uL6, found in Burkholderia vietnamiensis (strain G4 / LMG 22486) (Burkholderia cepacia (strain R1808)).